A 717-amino-acid polypeptide reads, in one-letter code: Delta-1-pyrroline-5-carboxylate synthase A (717 aa).

The segment at 1 to 296 (MEELDRSRAF…WAPITDSNAR (296 aa)) is glutamate 5-kinase. Ser-60, Asp-157, and Asn-176 together coordinate substrate. ATP is bound by residues 196 to 197 (SD) and 236 to 242 (RGGMTAK). Residues 297-717 (DMAVAARESS…YTHQDIPIQA (421 aa)) are gamma-glutamyl phosphate reductase.

The protein in the N-terminal section; belongs to the glutamate 5-kinase family. In the C-terminal section; belongs to the gamma-glutamyl phosphate reductase family.

The catalysed reaction is L-glutamate + ATP = L-glutamyl 5-phosphate + ADP. It carries out the reaction L-glutamate 5-semialdehyde + phosphate + NADP(+) = L-glutamyl 5-phosphate + NADPH + H(+). Its pathway is amino-acid biosynthesis; L-proline biosynthesis; L-glutamate 5-semialdehyde from L-glutamate: step 1/2. The protein operates within amino-acid biosynthesis; L-proline biosynthesis; L-glutamate 5-semialdehyde from L-glutamate: step 2/2. In terms of biological role, P5CS plays a key role in proline biosynthesis, leading to osmoregulation in plants. The chain is Delta-1-pyrroline-5-carboxylate synthase A (P5CSA) from Arabidopsis thaliana (Mouse-ear cress).